A 950-amino-acid chain; its full sequence is Protocadherin alpha-9 (950 aa).

The first 29 residues, 1–29 (MLYSSRGDPEGQPLLLSLLILAMWVVGSG), serve as a signal peptide directing secretion. Cadherin domains follow at residues 30–133 (QLHY…PPVF), 134–242 (PATQ…APVF), 243–350 (DRTL…APQL), 351–455 (TIKT…APAF), 456–565 (AQSE…APAL), and 588–678 (GVVV…APKS). Residues 30 to 697 (QLHYSVPEEA…GPEVTLVDVN (668 aa)) are Extracellular-facing. N-linked (GlcNAc...) asparagine glycosylation is found at N254 and N265. N548 carries N-linked (GlcNAc...) asparagine glycosylation. The helical transmembrane segment at 698 to 718 (VYLIIAICAVSSLLVLTLLLY) threads the bilayer. Residues 719-950 (TVLRCSAMPT…GNSTTDNSDQ (232 aa)) lie on the Cytoplasmic side of the membrane. The PXXP 1 repeat unit spans residues 734-737 (PGKP). Residues 734–894 (PGKPTLVCSS…PDKFIIPGSP (161 aa)) are 5 X 4 AA repeats of P-X-X-P. Disordered stretches follow at residues 770 to 808 (MAFSPGLSPCAGSTERTGEPSASSDSTGKPRQPNPDWRY), 827 to 856 (ILRAGPGGPDQQWPTVSSATPEPEAGEVSP), and 871 to 950 (YGPG…NSDQ). Residues 789-798 (PSASSDSTGK) show a composition bias toward polar residues. PXXP repeat units lie at residues 799–802 (PRQP), 832–835 (PGGP), 873–876 (PGNP), and 891–894 (PGSP). A compositionally biased stretch (basic and acidic residues) spans 909–923 (DKSDFITFGKKEETK).

Its subcellular location is the cell membrane. Its function is as follows. Potential calcium-dependent cell-adhesion protein. May be involved in the establishment and maintenance of specific neuronal connections in the brain. The sequence is that of Protocadherin alpha-9 (PCDHA9) from Homo sapiens (Human).